Consider the following 379-residue polypeptide: UDP-4-amino-4-deoxy-L-arabinose--oxoglutarate aminotransferase (379 aa).

The residue at position 182 (K182) is an N6-(pyridoxal phosphate)lysine.

The protein belongs to the DegT/DnrJ/EryC1 family. ArnB subfamily. Homodimer. It depends on pyridoxal 5'-phosphate as a cofactor.

It catalyses the reaction UDP-4-amino-4-deoxy-beta-L-arabinose + 2-oxoglutarate = UDP-beta-L-threo-pentopyranos-4-ulose + L-glutamate. It participates in nucleotide-sugar biosynthesis; UDP-4-deoxy-4-formamido-beta-L-arabinose biosynthesis; UDP-4-deoxy-4-formamido-beta-L-arabinose from UDP-alpha-D-glucuronate: step 2/3. The protein operates within bacterial outer membrane biogenesis; lipopolysaccharide biosynthesis. Functionally, catalyzes the conversion of UDP-4-keto-arabinose (UDP-Ara4O) to UDP-4-amino-4-deoxy-L-arabinose (UDP-L-Ara4N). The modified arabinose is attached to lipid A and is required for resistance to polymyxin and cationic antimicrobial peptides. In Escherichia coli O127:H6 (strain E2348/69 / EPEC), this protein is UDP-4-amino-4-deoxy-L-arabinose--oxoglutarate aminotransferase.